Reading from the N-terminus, the 252-residue chain is GTP cyclohydrolase 1 type 2 homolog (252 aa).

Residues His65, His66, Asp103, His220, and Glu224 each coordinate a divalent metal cation.

This sequence belongs to the GTP cyclohydrolase I type 2/NIF3 family. Homohexamer.

The chain is GTP cyclohydrolase 1 type 2 homolog from Pseudomonas aeruginosa (strain ATCC 15692 / DSM 22644 / CIP 104116 / JCM 14847 / LMG 12228 / 1C / PRS 101 / PAO1).